The sequence spans 412 residues: Squamosa promoter-binding-like protein 2 (412 aa).

A disordered region spans residues 1–81; sequence MDWDAKMPSW…AAAAGKRARA (81 aa). A compositionally biased stretch (gly residues) spans 18–31; it reads PSGGGGGGGGGGGA. Composition is skewed to low complexity over residues 48 to 57 and 67 to 81; these read VSAASAAPAA and SSSS…RARA. The SBP-type zinc finger occupies 89–167; it reads VPACSVEGCA…DGHNKRRRKP (79 aa). Residues cysteine 92, cysteine 97, cysteine 115, histidine 118, cysteine 134, cysteine 137, histidine 141, and cysteine 153 each coordinate Zn(2+). The short motif at 150–166 is the Bipartite nuclear localization signal element; that stretch reads KRSCRKRLDGHNKRRRK.

In terms of tissue distribution, expressed in stems, leaf sheaths, and young panicles.

The protein localises to the nucleus. Its function is as follows. Trans-acting factor that binds specifically to the consensus nucleotide sequence 5'-TNCGTACAA-3'. May be involved in panicle development. The sequence is that of Squamosa promoter-binding-like protein 2 (SPL2) from Oryza sativa subsp. japonica (Rice).